The following is a 309-amino-acid chain: MRRKVSIIGAGAVGATTAQYLAARNIADLVLVDIVENLPQGKALDLLEAGPVLGYDCQIVGSNSYDATAGSDVIVITSGSPRKPGMSRDDLLRVNMNIVRSVTEQAAPLSPDAVIIVVTNPLDAMCHVALEASGFPPARVVGQAGVLDAARFRAFVALELGVSPRDVHAMVLGGHGDTMVPLPRYTTVSGIPITQLIPADRIQAIVERTRDGGGEIVRLLGTSAFYAPAASVAEMVEAVLLDANRVLAASTYLTGQYGIHDLYVGVPIRLGAGGVKEIIEVELTDEERAALHRSANAVRELVQAMKQLT.

Residues 9–14 (GAGAVG) and Asp33 contribute to the NAD(+) site. Residues Arg82 and Arg88 each coordinate substrate. NAD(+) contacts are provided by residues Asn95 and 118–120 (VTN). The substrate site is built by Asn120 and Arg151. The active-site Proton acceptor is the His175.

This sequence belongs to the LDH/MDH superfamily. MDH type 3 family.

It catalyses the reaction (S)-malate + NAD(+) = oxaloacetate + NADH + H(+). Its function is as follows. Catalyzes the reversible oxidation of malate to oxaloacetate. This chain is Malate dehydrogenase, found in Thermomicrobium roseum (strain ATCC 27502 / DSM 5159 / P-2).